The sequence spans 106 residues: uncharacterized protein (106 aa).

The interval 1–46 is disordered; it reads MPQGGTPCRRARRAVRPERPTSPEGVFCVGGGAPGGPPDTTNTVSA.

This is an uncharacterized protein from Gracula (BFDV).